Here is a 106-residue protein sequence, read N- to C-terminus: Putative protein SH (106 aa).

Residues 48 to 106 (HSQQNNSGHQFGDRFHSKGHQDTEGRILWKEASTRTTDSTETADTQLVQRQGNGGICLS) form a disordered region. The segment covering 58-80 (FGDRFHSKGHQDTEGRILWKEAS) has biased composition (basic and acidic residues). A compositionally biased stretch (low complexity) spans 81–92 (TRTTDSTETADT).

In terms of tissue distribution, heart.

In terms of biological role, may be involved with the regulation of GNRH gene expression. It is not known if this protein is transcribed. The polypeptide is Putative protein SH (Rattus norvegicus (Rat)).